A 121-amino-acid polypeptide reads, in one-letter code: Ribonuclease P protein component (121 aa).

It belongs to the RnpA family. Consists of a catalytic RNA component (M1 or rnpB) and a protein subunit.

It catalyses the reaction Endonucleolytic cleavage of RNA, removing 5'-extranucleotides from tRNA precursor.. In terms of biological role, RNaseP catalyzes the removal of the 5'-leader sequence from pre-tRNA to produce the mature 5'-terminus. It can also cleave other RNA substrates such as 4.5S RNA. The protein component plays an auxiliary but essential role in vivo by binding to the 5'-leader sequence and broadening the substrate specificity of the ribozyme. This Coxiella burnetii (strain Dugway 5J108-111) protein is Ribonuclease P protein component.